The sequence spans 63 residues: Lantipeptide Flvbeta.a (63 aa).

The propeptide at 1 to 28 (MSEKNMEKAGVVKADELDEMIDETTGGA) is cleaved by FlvT. 4 positions are modified to 2,3-didehydrobutyrine; by FlvM2: T30, T33, T38, and T39. The lanthionine (Ser-Cys); by FlvM2 cross-link spans 43–49 (SKGLQNC). T54 and T55 each carry 2,3-didehydrobutyrine; by FlvM2.

Maturation of FlvA2 peptides involves the enzymatic conversion of Thr, and Ser into dehydrated AA and the formation of thioether bonds with cysteines. Modifications are processed by the flavecin synthetase FlvM2. This is followed by membrane translocation and cleavage of the modified precursor. Post-translationally, contains DL-lanthionine, when coepressed in E.coli with the flavecin synthetase FlvM2.

It is found in the secreted. Functionally, lanthionine-containing peptide that does probably not show antibacterial activity, since its analog [+3]Flvbeta.a does not show antibacterial activity against M.luteus. Also does not show antibiotic activity when tested with [Del2]Flvalpha.a, an analog of Flvalpha.a, which is encoded by the same operon than Flvbeta.a. The bactericidal activity of lantibiotics is based on depolarization of energized bacterial cytoplasmic membranes, initiated by the formation of aqueous transmembrane pores. The chain is Lantipeptide Flvbeta.a from Ruminococcus flavefaciens.